The primary structure comprises 529 residues: CTP synthase (529 aa).

The amidoligase domain stretch occupies residues 1–270 (MKYIVVTGGV…ADVVCSYLSL (270 aa)). Residue serine 12 participates in CTP binding. Serine 12 is a UTP binding site. Residues 13–18 (GLGKGI) and aspartate 70 contribute to the ATP site. Mg(2+) contacts are provided by aspartate 70 and glutamate 145. Residues 152–154 (DIE), 191–196 (KTKPTQ), and lysine 227 contribute to the CTP site. Residues 191–196 (KTKPTQ) and lysine 227 each bind UTP. 243–245 (KDA) contacts ATP. Residues 293 to 525 (VAIVSKYGIE…VEACKKNKSS (233 aa)) enclose the Glutamine amidotransferase type-1 domain. Glycine 349 is a binding site for L-glutamine. Residue cysteine 376 is the Nucleophile; for glutamine hydrolysis of the active site. L-glutamine contacts are provided by residues 377 to 380 (LGFQ), glutamate 400, and arginine 455. Residues histidine 498 and glutamate 500 contribute to the active site.

Belongs to the CTP synthase family. In terms of assembly, homotetramer.

It carries out the reaction UTP + L-glutamine + ATP + H2O = CTP + L-glutamate + ADP + phosphate + 2 H(+). The enzyme catalyses L-glutamine + H2O = L-glutamate + NH4(+). It catalyses the reaction UTP + NH4(+) + ATP = CTP + ADP + phosphate + 2 H(+). Its pathway is pyrimidine metabolism; CTP biosynthesis via de novo pathway; CTP from UDP: step 2/2. Its activity is regulated as follows. Allosterically activated by GTP, when glutamine is the substrate; GTP has no effect on the reaction when ammonia is the substrate. The allosteric effector GTP functions by stabilizing the protein conformation that binds the tetrahedral intermediate(s) formed during glutamine hydrolysis. Inhibited by the product CTP, via allosteric rather than competitive inhibition. Its function is as follows. Catalyzes the ATP-dependent amination of UTP to CTP with either L-glutamine or ammonia as the source of nitrogen. Regulates intracellular CTP levels through interactions with the four ribonucleotide triphosphates. In Methanoculleus marisnigri (strain ATCC 35101 / DSM 1498 / JR1), this protein is CTP synthase.